The sequence spans 521 residues: Protein nucleotidyltransferase YdiU (521 aa).

Positions 109, 111, 112, 131, 143, 144, 194, and 201 each coordinate ATP. The Proton acceptor role is filled by D270. Mg(2+) contacts are provided by N271 and D280. D280 is a binding site for ATP.

This sequence belongs to the SELO family. Mg(2+) serves as cofactor. Mn(2+) is required as a cofactor.

It catalyses the reaction L-seryl-[protein] + ATP = 3-O-(5'-adenylyl)-L-seryl-[protein] + diphosphate. The catalysed reaction is L-threonyl-[protein] + ATP = 3-O-(5'-adenylyl)-L-threonyl-[protein] + diphosphate. It carries out the reaction L-tyrosyl-[protein] + ATP = O-(5'-adenylyl)-L-tyrosyl-[protein] + diphosphate. The enzyme catalyses L-histidyl-[protein] + UTP = N(tele)-(5'-uridylyl)-L-histidyl-[protein] + diphosphate. It catalyses the reaction L-seryl-[protein] + UTP = O-(5'-uridylyl)-L-seryl-[protein] + diphosphate. The catalysed reaction is L-tyrosyl-[protein] + UTP = O-(5'-uridylyl)-L-tyrosyl-[protein] + diphosphate. In terms of biological role, nucleotidyltransferase involved in the post-translational modification of proteins. It can catalyze the addition of adenosine monophosphate (AMP) or uridine monophosphate (UMP) to a protein, resulting in modifications known as AMPylation and UMPylation. In Burkholderia thailandensis (strain ATCC 700388 / DSM 13276 / CCUG 48851 / CIP 106301 / E264), this protein is Protein nucleotidyltransferase YdiU.